The chain runs to 501 residues: Ribose import ATP-binding protein RbsA (501 aa).

2 ABC transporter domains span residues 5–241 (LQLK…VGRK) and 252–495 (APGD…VGKL). 37–44 (GENGAGKS) lines the ATP pocket.

This sequence belongs to the ABC transporter superfamily. Ribose importer (TC 3.A.1.2.1) family. In terms of assembly, the complex is composed of an ATP-binding protein (RbsA), two transmembrane proteins (RbsC) and a solute-binding protein (RbsB).

Its subcellular location is the cell inner membrane. It carries out the reaction D-ribose(out) + ATP + H2O = D-ribose(in) + ADP + phosphate + H(+). Its function is as follows. Part of the ABC transporter complex RbsABC involved in ribose import. Responsible for energy coupling to the transport system. This Escherichia coli O6:H1 (strain CFT073 / ATCC 700928 / UPEC) protein is Ribose import ATP-binding protein RbsA.